Consider the following 669-residue polypeptide: Alpha-1,4-glucan:maltose-1-phosphate maltosyltransferase 2 (669 aa).

Alpha-maltose 1-phosphate-binding residues include lysine 255, glutamine 315, and aspartate 350. The active-site Nucleophile is the aspartate 385. Asparagine 386 serves as a coordination point for alpha-maltose 1-phosphate. The active-site Proton donor is the glutamate 414. 525 to 526 (KY) lines the alpha-maltose 1-phosphate pocket.

This sequence belongs to the glycosyl hydrolase 13 family. GlgE subfamily. As to quaternary structure, homodimer.

It carries out the reaction alpha-maltose 1-phosphate + [(1-&gt;4)-alpha-D-glucosyl](n) = [(1-&gt;4)-alpha-D-glucosyl](n+2) + phosphate. In terms of biological role, maltosyltransferase that uses maltose 1-phosphate (M1P) as the sugar donor to elongate linear or branched alpha-(1-&gt;4)-glucans. Maltooligosaccharides with a degree of polymerization (DP) superior or equal to 4 are efficient acceptors, with DP6 being optimal in the GlgE-catalyzed polymerization with M1P. Is probably involved in a branched alpha-glucan biosynthetic pathway from trehalose, together with TreS, Mak and GlgB. The sequence is that of Alpha-1,4-glucan:maltose-1-phosphate maltosyltransferase 2 (glgE2) from Streptomyces coelicolor (strain ATCC BAA-471 / A3(2) / M145).